The sequence spans 202 residues: LexA repressor (202 aa).

Positions 28–48 (RAEIAQRLGFRSPNAAEEHLK) form a DNA-binding region, H-T-H motif. Active-site for autocatalytic cleavage activity residues include Ser-119 and Lys-156.

The protein belongs to the peptidase S24 family. As to quaternary structure, homodimer.

The enzyme catalyses Hydrolysis of Ala-|-Gly bond in repressor LexA.. Functionally, represses a number of genes involved in the response to DNA damage (SOS response), including recA and lexA. Binds to the 16 bp palindromic sequence 5'-CTGTATATATATACAG-3'. In the presence of single-stranded DNA, RecA interacts with LexA causing an autocatalytic cleavage which disrupts the DNA-binding part of LexA, leading to derepression of the SOS regulon and eventually DNA repair. This chain is LexA repressor, found in Citrobacter koseri (strain ATCC BAA-895 / CDC 4225-83 / SGSC4696).